The chain runs to 878 residues: Alanine--tRNA ligase (878 aa).

Zn(2+) is bound by residues His558, His562, Cys663, and His667.

Belongs to the class-II aminoacyl-tRNA synthetase family. The cofactor is Zn(2+).

The protein localises to the cytoplasm. The enzyme catalyses tRNA(Ala) + L-alanine + ATP = L-alanyl-tRNA(Ala) + AMP + diphosphate. In terms of biological role, catalyzes the attachment of alanine to tRNA(Ala) in a two-step reaction: alanine is first activated by ATP to form Ala-AMP and then transferred to the acceptor end of tRNA(Ala). Also edits incorrectly charged Ser-tRNA(Ala) and Gly-tRNA(Ala) via its editing domain. In Mycoplasmopsis synoviae (strain 53) (Mycoplasma synoviae), this protein is Alanine--tRNA ligase.